The primary structure comprises 497 residues: Lysine--tRNA ligase (497 aa).

Mg(2+)-binding residues include E409 and E416.

The protein belongs to the class-II aminoacyl-tRNA synthetase family. As to quaternary structure, homodimer. Mg(2+) serves as cofactor.

The protein localises to the cytoplasm. It carries out the reaction tRNA(Lys) + L-lysine + ATP = L-lysyl-tRNA(Lys) + AMP + diphosphate. The sequence is that of Lysine--tRNA ligase from Streptococcus pyogenes serotype M49 (strain NZ131).